The chain runs to 984 residues: Calsyntenin-1 (984 aa).

The signal sequence occupies residues 1–18; the sequence is MRTAYFIFVGALLGVSYA. Over 19-850 the chain is Extracellular; sequence KHHHAARAPI…VGQGAIAGGA (832 aa). Cadherin domains lie at 66–142 and 143–257; these read YLLT…APEI and ENPW…APGV. N-linked (GlcNAc...) asparagine glycans are attached at residues N206 and N305. A helical transmembrane segment spans residues 851 to 871; the sequence is VAVVVVVCVGFLLVLLVIGVL. Residues 872-984 lie on the Cytoplasmic side of the membrane; it reads KMRDTPMPRR…ISTNARSYRV (113 aa). The tract at residues 878-959 is disordered; sequence MPRRRRQKRQ…QTEVLPHLDA (82 aa). Basic and acidic residues predominate over residues 886 to 896; the sequence is RQSDGGMHWDD. Residues 918-951 show a composition bias toward acidic residues; the sequence is EFSDEEEEEETDGESECSYRDEEDDVSEDEEDQT.

This sequence belongs to the calsyntenin family. In terms of assembly, interacts with isoform c of daf-2 (daf-2c); promoting daf-2c localization to synaptic regions. Interacts with klc-2. Interacts with unc-104. In terms of processing, a proportion of the protein is proteolytically cleaved before the transmembrane domain in neurons, leading to release in the extracellular space. In terms of tissue distribution, widely expressed in the nervous system. Highly expressed in many head neurons, including most amphid sensory neurons. Also expressed in other tissues, such as intestine and gonadal sheath cells.

Its subcellular location is the golgi apparatus membrane. It is found in the perikaryon. It localises to the cell projection. The protein resides in the axon. The protein localises to the secreted. Its subcellular location is the synaptic cleft. Cell adhesion molecule involved in associative learning and memory. Acts as a regulator of GABAergic synaptic transmission at neuromuscular junctions by regulating GABA synaptic vesicle precursor transport: possibly functions as a cargo adapter for unc-104-mediated transport of synaptic vesicle precursors. Promotes localization of isoform c of daf-2 (daf-2c) to synaptic regions by acting as a signaling adapter between klc-2 and daf-2c. In terms of biological role, acts as aregulator of glutamate signaling in the sensory neurons by inhibiting the activity of command interneurons, thereby negatively regulating motor circuit activity and locomotion. The polypeptide is Calsyntenin-1 (Caenorhabditis elegans).